The sequence spans 551 residues: Lysine--tRNA ligase (551 aa).

The 'HIGH' region motif lies at 54-62; the sequence is PSGLPHIGT. Residues 303 to 307 carry the 'KMSKS' region motif; the sequence is KISKS. K306 serves as a coordination point for ATP.

It belongs to the class-I aminoacyl-tRNA synthetase family.

It is found in the cytoplasm. It catalyses the reaction tRNA(Lys) + L-lysine + ATP = L-lysyl-tRNA(Lys) + AMP + diphosphate. This Brucella melitensis biotype 1 (strain ATCC 23456 / CCUG 17765 / NCTC 10094 / 16M) protein is Lysine--tRNA ligase.